The sequence spans 763 residues: Phosphoglycerol transferase I (763 aa).

4 consecutive transmembrane segments (helical) span residues 1-21 (MSELLSFALFLASVLIYAWKA), 26-46 (WWFAATLTVLGLFVVLNITLF), 77-97 (ILPGIGIVLGLTAVFGALGWI), and 108-128 (FGYSLLALLLALGSVDASPAF).

The protein belongs to the OpgB family.

The protein localises to the cell inner membrane. It catalyses the reaction a phosphatidylglycerol + a membrane-derived-oligosaccharide D-glucose = a 1,2-diacyl-sn-glycerol + a membrane-derived-oligosaccharide 6-(glycerophospho)-D-glucose.. Its pathway is glycan metabolism; osmoregulated periplasmic glucan (OPG) biosynthesis. Functionally, transfers a phosphoglycerol residue from phosphatidylglycerol to the membrane-bound nascent glucan backbones. In Escherichia coli (strain 55989 / EAEC), this protein is Phosphoglycerol transferase I.